The sequence spans 301 residues: MHKGLKRLGVITSLGVLLVLIQGALVTNTGSGEGCGQTWPLCFGQVIPLDPPPETVIEFSHRLVAGIVGMLVILMAIWSWRRLKHMPETRFLAVISVFMIIFQGLLGAGAVVFGQSDLIMALHFGFSALSFASVVLLTRLAFEDSNPQKQYAPIVSKAYKGYVIFVAIYSYVAIYTGAYVKHTNATLACSGFPLCNGQWVPDVFTEAIGVQLLHRSAAILLSLLLLVLFIWTVKTFRASRVLVVCASLAMLLVIGQAASGVAVVLTYNATLTLGIFHALLISLLFTLLCYMVMLVTRHKAK.

Residues 1–7 (MHKGLKR) are Cytoplasmic-facing. The chain crosses the membrane as a helical span at residues 8-28 (LGVITSLGVLLVLIQGALVTN). Residues 29–56 (TGSGEGCGQTWPLCFGQVIPLDPPPETV) lie on the Extracellular side of the membrane. C35 and C42 are joined by a disulfide. Residues 57–77 (IEFSHRLVAGIVGMLVILMAI) traverse the membrane as a helical segment. E58 is an active-site residue. H61 is a heme o binding site. At 78–92 (WSWRRLKHMPETRFL) the chain is on the cytoplasmic side. A helical membrane pass occupies residues 93 to 113 (AVISVFMIIFQGLLGAGAVVF). At 114-117 (GQSD) the chain is on the extracellular side. A helical transmembrane segment spans residues 118-138 (LIMALHFGFSALSFASVVLLT). Residue H123 participates in heme o binding. The Cytoplasmic portion of the chain corresponds to 139 to 159 (RLAFEDSNPQKQYAPIVSKAY). The chain crosses the membrane as a helical span at residues 160-180 (KGYVIFVAIYSYVAIYTGAYV). Over 181–215 (KHTNATLACSGFPLCNGQWVPDVFTEAIGVQLLHR) the chain is Extracellular. C189 and C195 are oxidised to a cystine. A heme b-binding site is contributed by H214. The chain crosses the membrane as a helical span at residues 216-236 (SAAILLSLLLLVLFIWTVKTF). Residues 237–240 (RASR) are Cytoplasmic-facing. Residues 241–261 (VLVVCASLAMLLVIGQAASGV) traverse the membrane as a helical segment. The Extracellular segment spans residues 262-274 (AVVLTYNATLTLG). The helical transmembrane segment at 275 to 295 (IFHALLISLLFTLLCYMVMLV) threads the bilayer. Position 277 (H277) interacts with heme b. The Cytoplasmic portion of the chain corresponds to 296 to 301 (TRHKAK).

This sequence belongs to the COX15/CtaA family. Type 1 subfamily. In terms of assembly, interacts with CtaB. Requires heme b as cofactor.

The protein localises to the cell membrane. It catalyses the reaction Fe(II)-heme o + 2 A + H2O = Fe(II)-heme a + 2 AH2. It functions in the pathway porphyrin-containing compound metabolism; heme A biosynthesis; heme A from heme O: step 1/1. In terms of biological role, catalyzes the conversion of heme O to heme A by two successive hydroxylations of the methyl group at C8. The first hydroxylation forms heme I, the second hydroxylation results in an unstable dihydroxymethyl group, which spontaneously dehydrates, resulting in the formyl group of heme A. This Shouchella clausii (strain KSM-K16) (Alkalihalobacillus clausii) protein is Heme A synthase.